Consider the following 448-residue polypeptide: Alginate biosynthesis transcriptional regulatory protein AlgB (448 aa).

The Response regulatory domain occupies 10 to 124 (RILLVDDESA…QLRLATAKQL (115 aa)). D59 carries the post-translational modification 4-aspartylphosphate. Residues 147–376 (LDSHSPAMMA…LRNVVERASI (230 aa)) enclose the Sigma-54 factor interaction domain. ATP-binding positions include 175–182 (GESGTGKG) and 238–247 (ADGGTLFLDE). Residues 425–444 (LDQAAKTLGIDASTLYRKRK) constitute a DNA-binding region (H-T-H motif).

It functions in the pathway glycan biosynthesis; alginate biosynthesis [regulation]. In terms of biological role, positive regulator of the alginate biosynthetic gene algD. The protein is Alginate biosynthesis transcriptional regulatory protein AlgB (algB) of Pseudomonas putida (strain ATCC 47054 / DSM 6125 / CFBP 8728 / NCIMB 11950 / KT2440).